A 651-amino-acid chain; its full sequence is Probable Xaa-Pro aminopeptidase P (651 aa).

Residues D448, D459, E557, and E571 each coordinate Mn(2+).

Belongs to the peptidase M24B family. It depends on Mn(2+) as a cofactor.

It catalyses the reaction Release of any N-terminal amino acid, including proline, that is linked to proline, even from a dipeptide or tripeptide.. Its function is as follows. Catalyzes the removal of a penultimate prolyl residue from the N-termini of peptides. The sequence is that of Probable Xaa-Pro aminopeptidase P (AMPP) from Coccidioides posadasii (strain C735) (Valley fever fungus).